The chain runs to 281 residues: Nucleoid occlusion protein (281 aa).

The H-T-H motif DNA-binding region spans 145–164 (EALAQRLGKGQSTIANKLRL).

It belongs to the ParB family.

It is found in the cytoplasm. It localises to the nucleoid. Functionally, effects nucleoid occlusion by binding relatively nonspecifically to DNA and preventing the assembly of the division machinery in the vicinity of the nucleoid, especially under conditions that disturb the cell cycle. It helps to coordinate cell division and chromosome segregation by preventing the formation of the Z ring through the nucleoid, which would cause chromosome breakage. This Geobacillus sp. (strain WCH70) protein is Nucleoid occlusion protein.